The sequence spans 225 residues: Protein ERP3 (225 aa).

A signal peptide spans 1-23 (MSNLCVLFFQFFFLAQFFAEASP). At 24–195 (LTFELNKGRK…STEHRIVMFS (172 aa)) the chain is on the lumenal side. The GOLD domain maps to 33 to 172 (KECLYTLTPE…LHVLERNIQY (140 aa)). A compositionally biased stretch (basic residues) spans 129-138 (ERRKARKAQR). The disordered stretch occupies residues 129–149 (ERRKARKAQRNLRDSKTDPLQ). Residues 196–216 (IYGILLIIGMSCAQIAILEFI) traverse the membrane as a helical segment. The Cytoplasmic segment spans residues 217 to 225 (FRESRKHNV).

It belongs to the EMP24/GP25L family.

The protein resides in the endoplasmic reticulum membrane. Its function is as follows. Involved in vesicular protein trafficking. This Saccharomyces cerevisiae (strain ATCC 204508 / S288c) (Baker's yeast) protein is Protein ERP3 (ERP3).